Here is a 410-residue protein sequence, read N- to C-terminus: 2-epi-5-epi-valiolone synthase (410 aa).

NAD(+)-binding positions include aspartate 66, 97-100, 130-134, 154-155, lysine 167, lysine 176, and 194-197; these read ETLK, GVLMD, TT, and FLAT. Lysine 167 is an active-site residue. Positions 209, 280, and 296 each coordinate a divalent metal cation.

It belongs to the sugar phosphate cyclases superfamily. EEVS family. It depends on NAD(+) as a cofactor. Co(2+) is required as a cofactor.

The enzyme catalyses D-sedoheptulose 7-phosphate = 2-epi-5-epi-valiolone + phosphate. Functionally, catalyzes the cyclization of D-sedoheptulose 7-phosphate to 2-epi-5-epi-valiolone. Involved in salbostatin biosynthesis. In Streptomyces albus (strain ATCC 21838 / DSM 41398 / FERM P-419 / JCM 4703 / NBRC 107858), this protein is 2-epi-5-epi-valiolone synthase.